The chain runs to 299 residues: Sulfate adenylyltransferase subunit 2 (299 aa).

The protein belongs to the PAPS reductase family. CysD subfamily. Sulfate-activating enzymes, NodP and NodQ, may be physically associated.

It carries out the reaction sulfate + ATP + H(+) = adenosine 5'-phosphosulfate + diphosphate. Its function is as follows. Proposed to provide activated sulfate for transfer to nod factor. This Rhizobium meliloti (strain 1021) (Ensifer meliloti) protein is Sulfate adenylyltransferase subunit 2 (nodP).